Here is a 951-residue protein sequence, read N- to C-terminus: Replication protein A 70 kDa DNA-binding subunit C (951 aa).

Positions 139-172 are disordered; sequence AQTNNGTYSGGASMLGPSVAPRAEQAASNSSYGG. Residues 320 to 403 constitute a DNA-binding region (OB); it reads WTIKARVTAK…NTLNHDYEIT (84 aa). A C4-type zinc finger spans residues 612 to 639; that stretch reads CPKLLPVGRQCNKKAINNGDGMWHCDRC.

Belongs to the replication factor A protein 1 family. In terms of assembly, heterotrimer of RPA1, RPA2 and RPA3 (canonical replication protein A complex). Interacts with RPA2C.

It localises to the nucleus. Its function is as follows. Component of the replication protein A complex (RPA) required for DNA recombination, repair and replication. The activity of RPA is mediated by single-stranded DNA binding and protein interactions. Probably involved in repair of double-strand DNA breaks (DSBs) induced by genotoxic stresses. This Oryza sativa subsp. japonica (Rice) protein is Replication protein A 70 kDa DNA-binding subunit C (RPA1C).